Consider the following 48-residue polypeptide: Large ribosomal subunit protein bL32 (48 aa).

The disordered stretch occupies residues 28 to 48; that stretch reads VKDKDGSWKMPHRINKTTGEY.

This sequence belongs to the bacterial ribosomal protein bL32 family.

In Campylobacter concisus (strain 13826), this protein is Large ribosomal subunit protein bL32.